We begin with the raw amino-acid sequence, 20 residues long: Protein PR-L3 (20 aa).

This sequence belongs to the BetVI family.

The chain is Protein PR-L3 from Lupinus luteus (European yellow lupine).